A 633-amino-acid chain; its full sequence is Uracil permease (633 aa).

12 helical membrane-spanning segments follow: residues 143 to 163 (WWQC…FVVL), 173 to 193 (LSFP…WPVI), 197 to 217 (VMAI…VSLM), 242 to 262 (YEFM…LVPP), 268 to 288 (LFTV…IWAI), 310 to 330 (FSWA…TMVI), 350 to 370 (LVCI…VTAA), 400 to 420 (AGVF…NISA), 442 to 462 (GSLF…MATS), 465 to 485 (FTMA…VVCS), 521 to 541 (ALAA…AEVG), and 559 to 579 (YWVG…FFPV).

The protein belongs to the purine-cytosine permease (2.A.39) family. In terms of processing, glycosylated (possible); but there is not yet direct biochemical evidence for it.

The protein resides in the membrane. Functionally, transport of uracil. This Saccharomyces cerevisiae (strain ATCC 204508 / S288c) (Baker's yeast) protein is Uracil permease (FUR4).